A 173-amino-acid chain; its full sequence is MSSARSPYLRFGLIFAAVAFLLDQVTKWIVTVPLSLEPKGQIELTSFFNLTWAENCGISLSMFASCTDTTRWTLVAVTGIVAAAVAFWMTREQAKGDVIALALILGGALGNIVDRVRFGYVVDFADLHIGDFRPFMIFNVADACITIGVLLLVARALLLGEKAGQADAKPSVD.

Transmembrane regions (helical) follow at residues 11-31, 69-89, and 93-113; these read FGLIFAAVAFLLDQVTKWIVT, TTRWTLVAVTGIVAAAVAFWM, and QAKGDVIALALILGGALGNIV. Catalysis depends on residues Asp123 and Asp142. A helical transmembrane segment spans residues 134 to 154; that stretch reads PFMIFNVADACITIGVLLLVA.

The protein belongs to the peptidase A8 family.

The protein localises to the cell inner membrane. It catalyses the reaction Release of signal peptides from bacterial membrane prolipoproteins. Hydrolyzes -Xaa-Yaa-Zaa-|-(S,diacylglyceryl)Cys-, in which Xaa is hydrophobic (preferably Leu), and Yaa (Ala or Ser) and Zaa (Gly or Ala) have small, neutral side chains.. The protein operates within protein modification; lipoprotein biosynthesis (signal peptide cleavage). In terms of biological role, this protein specifically catalyzes the removal of signal peptides from prolipoproteins. This is Lipoprotein signal peptidase from Sphingopyxis alaskensis (strain DSM 13593 / LMG 18877 / RB2256) (Sphingomonas alaskensis).